The primary structure comprises 576 residues: Arginine--tRNA ligase (576 aa).

A 'HIGH' region motif is present at residues 132–142; sequence ANPTGPMHIGH.

This sequence belongs to the class-I aminoacyl-tRNA synthetase family. In terms of assembly, monomer.

It is found in the cytoplasm. It catalyses the reaction tRNA(Arg) + L-arginine + ATP = L-arginyl-tRNA(Arg) + AMP + diphosphate. The chain is Arginine--tRNA ligase from Ehrlichia ruminantium (strain Gardel).